A 304-amino-acid polypeptide reads, in one-letter code: Cbb3-type cytochrome c oxidase subunit CcoP (304 aa).

A run of 2 helical transmembrane segments spans residues 11 to 31 and 61 to 81; these read LYVAGITVVSLIFCLVVLIVA and WWAGLFLVTIAFAVIYLALYP. Cytochrome c domains lie at 129 to 209 and 216 to 296; these read QAMA…LSLS and VAAQ…WSLS. The heme c site is built by Cys-142, Cys-145, His-146, Met-185, Cys-228, Cys-231, His-232, and Met-273.

It belongs to the CcoP / FixP family. In terms of assembly, component of the cbb3-type cytochrome c oxidase at least composed of CcoN, CcoO, CcoQ and CcoP. The cofactor is heme c.

Its subcellular location is the cell inner membrane. Its pathway is energy metabolism; oxidative phosphorylation. In terms of biological role, C-type cytochrome. Part of the cbb3-type cytochrome c oxidase complex. CcoP subunit is required for transferring electrons from donor cytochrome c via its heme groups to CcoO subunit. From there, electrons are shuttled to the catalytic binuclear center of CcoN subunit where oxygen reduction takes place. The complex also functions as a proton pump. This Rubrivivax gelatinosus (Rhodocyclus gelatinosus) protein is Cbb3-type cytochrome c oxidase subunit CcoP.